The chain runs to 4456 residues: Dynein axonemal heavy chain 2 (4456 aa).

Positions 1 to 12 (MASKAEKKRKVA) are enriched in basic residues. Positions 1-55 (MASKAEKKRKVAGRGGARAGRVVRAPQSTAGPGATEASLLPDGQEPEPESGKEDS) are disordered. Positions 1-1795 (MASKAEKKRK…RQTNTQFQYG (1795 aa)) are stem. Residues 1218–1274 (LDQIAQMRAMLMAMRDEENNLRSNLGIFKIEQPVSKDLQILEKELDALQQVWEITRD) adopt a coiled-coil conformation. A TPR 1 repeat occupies 1439 to 1474 (EDNQVALSTMKASRFVKAFEKDVDHWERCLSLILEV). AAA stretches follow at residues 1794–2015 (YGYE…LLRY), 2075–2302 (DTIE…DNCN), 2407–2654 (RYPP…VFQG), and 2751–3003 (EYNL…LRRY). ATP-binding positions include 1832 to 1839 (GPAGTGKT), 2113 to 2120 (GGTGSSKT), and 2445 to 2452 (GPVGTGKT). The TPR 2 repeat unit spans residues 2750–2783 (NEYNLSPSVVPMQLVLFREAIEHITRIVRVIGQP). 2791–2798 (GIGGSGRQ) contributes to the ATP binding site. Residues 3018–3301 (YKKLLGEKRQ…EELRKKSEEM (284 aa)) form a stalk region. Residues 3041-3078 (FKIDETREKVEVMSLELEDAKKKVAEFQKQCEEYLVII) adopt a coiled-coil conformation. Residues 3101–3134 (IEEVKCQALADNAQKDLEEALPALEEAMRALESL) form a TPR 3 repeat. Coiled-coil stretches lie at residues 3245–3333 (KRIR…EEDL) and 3552–3596 (VRKE…GSLL). AAA regions lie at residues 3387-3617 (LTNP…EVTE) and 3833-4052 (VTSF…LLSL). 2 TPR repeats span residues 4101–4134 (TTPFYRLSVLDTYYIPKDGSLASYKEYISMLPSM) and 4135–4169 (DPPEAFGQHPNADVASQITEARTLFETLLSLQPQI).

The protein belongs to the dynein heavy chain family. As to quaternary structure, part of the axonemal inner dynein arm complex that consists of at least two heavy chains and a number of intermediate and light chains. Interacts with DNAI4.

The protein resides in the cytoplasm. Its subcellular location is the cytoskeleton. The protein localises to the cilium axoneme. It localises to the flagellum axoneme. Its function is as follows. As part of the axonemal inner dynein arm complex plays a central role in ciliary beat. Expressed in sperm flagellum, it is required for sperm motility. Dyneins are microtubule-based molecular motors possessing ATPase activities that can convert the chemical energy of ATP into relative sliding between adjacent microtubule doublets to generate ciliary bending. This is Dynein axonemal heavy chain 2 from Mus musculus (Mouse).